Here is a 155-residue protein sequence, read N- to C-terminus: Ribosomal RNA large subunit methyltransferase H (155 aa).

S-adenosyl-L-methionine contacts are provided by residues L73, G104, and 123-128 (ISKMTF).

It belongs to the RNA methyltransferase RlmH family. Homodimer.

The protein resides in the cytoplasm. The enzyme catalyses pseudouridine(1915) in 23S rRNA + S-adenosyl-L-methionine = N(3)-methylpseudouridine(1915) in 23S rRNA + S-adenosyl-L-homocysteine + H(+). In terms of biological role, specifically methylates the pseudouridine at position 1915 (m3Psi1915) in 23S rRNA. In Francisella philomiragia subsp. philomiragia (strain ATCC 25017 / CCUG 19701 / FSC 153 / O#319-036), this protein is Ribosomal RNA large subunit methyltransferase H.